Here is a 493-residue protein sequence, read N- to C-terminus: Ribose import ATP-binding protein RbsA (493 aa).

ABC transporter domains follow at residues 3–239 (IKMK…VGRE) and 252–493 (GRVV…TGGR). Residue 35–42 (GENGAGKS) coordinates ATP.

It belongs to the ABC transporter superfamily. Ribose importer (TC 3.A.1.2.1) family. In terms of assembly, the complex is composed of an ATP-binding protein (RbsA), two transmembrane proteins (RbsC) and a solute-binding protein (RbsB).

Its subcellular location is the cell membrane. The catalysed reaction is D-ribose(out) + ATP + H2O = D-ribose(in) + ADP + phosphate + H(+). Functionally, part of the ABC transporter complex RbsABC involved in ribose import. Responsible for energy coupling to the transport system. The sequence is that of Ribose import ATP-binding protein RbsA from Bacillus licheniformis (strain ATCC 14580 / DSM 13 / JCM 2505 / CCUG 7422 / NBRC 12200 / NCIMB 9375 / NCTC 10341 / NRRL NRS-1264 / Gibson 46).